A 414-amino-acid chain; its full sequence is Serine hydroxymethyltransferase (414 aa).

(6S)-5,6,7,8-tetrahydrofolate contacts are provided by residues Leu-121 and 125–127 (GHL). Position 229 is an N6-(pyridoxal phosphate)lysine (Lys-229).

The protein belongs to the SHMT family. In terms of assembly, homodimer. The cofactor is pyridoxal 5'-phosphate.

It is found in the cytoplasm. The enzyme catalyses (6R)-5,10-methylene-5,6,7,8-tetrahydrofolate + glycine + H2O = (6S)-5,6,7,8-tetrahydrofolate + L-serine. The protein operates within one-carbon metabolism; tetrahydrofolate interconversion. It participates in amino-acid biosynthesis; glycine biosynthesis; glycine from L-serine: step 1/1. Functionally, catalyzes the reversible interconversion of serine and glycine with tetrahydrofolate (THF) serving as the one-carbon carrier. This reaction serves as the major source of one-carbon groups required for the biosynthesis of purines, thymidylate, methionine, and other important biomolecules. Also exhibits THF-independent aldolase activity toward beta-hydroxyamino acids, producing glycine and aldehydes, via a retro-aldol mechanism. The polypeptide is Serine hydroxymethyltransferase (Variovorax paradoxus (strain S110)).